A 235-amino-acid polypeptide reads, in one-letter code: Ubiquinone/menaquinone biosynthesis C-methyltransferase UbiE (235 aa).

Residues Thr-60, Asp-80, 106 to 107, and Ser-123 contribute to the S-adenosyl-L-methionine site; that span reads DV.

The protein belongs to the class I-like SAM-binding methyltransferase superfamily. MenG/UbiE family.

The catalysed reaction is a 2-demethylmenaquinol + S-adenosyl-L-methionine = a menaquinol + S-adenosyl-L-homocysteine + H(+). It carries out the reaction a 2-methoxy-6-(all-trans-polyprenyl)benzene-1,4-diol + S-adenosyl-L-methionine = a 5-methoxy-2-methyl-3-(all-trans-polyprenyl)benzene-1,4-diol + S-adenosyl-L-homocysteine + H(+). The protein operates within quinol/quinone metabolism; menaquinone biosynthesis; menaquinol from 1,4-dihydroxy-2-naphthoate: step 2/2. It participates in cofactor biosynthesis; ubiquinone biosynthesis. Methyltransferase required for the conversion of demethylmenaquinol (DMKH2) to menaquinol (MKH2) and the conversion of 2-polyprenyl-6-methoxy-1,4-benzoquinol (DDMQH2) to 2-polyprenyl-3-methyl-6-methoxy-1,4-benzoquinol (DMQH2). The sequence is that of Ubiquinone/menaquinone biosynthesis C-methyltransferase UbiE from Bdellovibrio bacteriovorus (strain ATCC 15356 / DSM 50701 / NCIMB 9529 / HD100).